The primary structure comprises 973 residues: EF-hand calcium-binding domain-containing protein 13 (973 aa).

The disordered stretch occupies residues 384-448 (YSKNGINFKK…HSSLQKQVSS (65 aa)). Basic and acidic residues predominate over residues 396 to 405 (EKGEIHDSKS). Residues 406–418 (KPQSLKSSTSLSK) show a composition bias toward low complexity. EF-hand domains lie at 488 to 523 (LLDEEFQKIVTDTSRNENGMVELDDFVNALAKERSF), 524 to 559 (PECNALPGVIKAIDKIKDKNVDYEDLNTCLQNFGIY), 633 to 668 (LKKDEFLAALELVTVDEGDKVQFEEFAKVVRNMRDA), 756 to 791 (PKVNEIKEAANILSHVDNGKIGIPDLEHALKCLNVN), 792 to 827 (LTEEDFNEALNCCNVSDNMEVDLKDFLMKMKESPHF), and 864 to 899 (TANAILTVMLRHVPEHESGKVSIQEFMTKLSDILTI).

The chain is EF-hand calcium-binding domain-containing protein 13 (EFCAB13) from Homo sapiens (Human).